A 255-amino-acid polypeptide reads, in one-letter code: MLQISHLYADYGGKPALEDINLTLESGELLVVLGPSGCGKTTLLNLIAGFVPYQHGSIQLAGKRIEGPGAERGVVFQNEGLLPWRNVQDNVAFGLQLAGIEKMQRLEIAHQMLKKVGLEGAEKRYIWQLSDGQRQRVGIARALAANPQLLLLDEPFGALDAFTRDQMQTLLLKLWQETGKQVLLITHDIEEAVFMATELVLLSSGPGRVLERLRLNFARRFVAGESSRSIKSDPQFIAMREYVLSRVFEQREAFS.

One can recognise an ABC transporter domain in the interval 2–229 (LQISHLYADY…RFVAGESSRS (228 aa)). 34-41 (GPSGCGKT) is a binding site for ATP.

It belongs to the ABC transporter superfamily. Taurine importer (TC 3.A.1.17.1) family. The complex is composed of two ATP-binding proteins (TauB), two transmembrane proteins (TauC) and a solute-binding protein (TauA).

It is found in the cell inner membrane. It catalyses the reaction taurine(out) + ATP + H2O = taurine(in) + ADP + phosphate + H(+). In terms of biological role, part of the ABC transporter complex TauABC involved in taurine import. Responsible for energy coupling to the transport system. The protein is Taurine import ATP-binding protein TauB of Shigella flexneri.